The primary structure comprises 117 residues: uncharacterized protein (117 aa).

This is an uncharacterized protein from Methanocaldococcus jannaschii (strain ATCC 43067 / DSM 2661 / JAL-1 / JCM 10045 / NBRC 100440) (Methanococcus jannaschii).